Consider the following 94-residue polypeptide: MRTLTLLSAFLLVALQAWAEPLQARADEMPAQKQPPADDQDVVIYFSGDDSSSLQVPGSTKGLICHCRVLYCLFGEHLGGTSFIHGERYPICCY.

Positions 1-19 (MRTLTLLSAFLLVALQAWA) are cleaved as a signal peptide. Intrachain disulfides connect Cys65-Cys93 and Cys72-Cys92.

The protein belongs to the alpha-defensin family.

It is found in the secreted. Its function is as follows. Has antimicrobial activity. The protein is Defensin-7 (DEFA7) of Pan troglodytes (Chimpanzee).